The following is a 389-amino-acid chain: Na(+)/H(+) antiporter NhaA 1 (389 aa).

The next 11 helical transmembrane spans lie at 14 to 34, 47 to 67, 87 to 107, 117 to 137, 146 to 166, 171 to 191, 197 to 217, 252 to 272, 280 to 300, 321 to 341, and 356 to 376; these read AGGI…NSPL, FGMS…FLLI, IFPA…YVAF, GWAI…ALLG, VFLL…IALF, LSTL…MLNA, LIWY…SGVH, VAFA…LEGV, MLPL…IFTF, IFAV…ISSL, and LGIL…LHVS.

Belongs to the NhaA Na(+)/H(+) (TC 2.A.33) antiporter family.

The protein resides in the cell inner membrane. The enzyme catalyses Na(+)(in) + 2 H(+)(out) = Na(+)(out) + 2 H(+)(in). In terms of biological role, na(+)/H(+) antiporter that extrudes sodium in exchange for external protons. The polypeptide is Na(+)/H(+) antiporter NhaA 1 (Vibrio vulnificus (strain CMCP6)).